Reading from the N-terminus, the 109-residue chain is MQFKLAFVSIALATLAVATPAPRGEPASSCSTGDLQCCNTVEPASSPSASTILGLLGIVIQGVDVLVGLTCSPITVIGLESGGCSAQAVCCTDNSNGGLISIGCLPVTL.

Residues Met1–Ala18 form the signal peptide. Disulfide bonds link Cys30–Cys90, Cys37–Cys84, Cys38–Cys71, and Cys91–Cys104.

Belongs to the fungal hydrophobin family. Self-assembles to form functional amyloid fibrils called rodlets. Self-assembly into fibrillar rodlets occurs spontaneously at hydrophobic:hydrophilic interfaces and the rodlets further associate laterally to form amphipathic monolayers.

The protein localises to the secreted. It localises to the cell wall. In terms of biological role, aerial growth, conidiation, and dispersal of filamentous fungi in the environment rely upon a capability of their secreting small amphipathic proteins called hydrophobins (HPBs) with low sequence identity. Class I can self-assemble into an outermost layer of rodlet bundles on aerial cell surfaces, conferring cellular hydrophobicity that supports fungal growth, development and dispersal; whereas Class II form highly ordered films at water-air interfaces through intermolecular interactions but contribute nothing to the rodlet structure. Hyd2 is a class I hydrophobin that may allow the dikaryotic mycelia to attach to the hydrophobic surface of the substrate. Higher expression in dikaryotic mycelia than in monokaryotic mycelia indicates that dikaryons require more hyd2 hydrophobin than the monokaryons, presumably for a higher rate of hyphal growth. The polypeptide is Class I hydrophobin 2 (Lentinula edodes (Shiitake mushroom)).